The primary structure comprises 357 residues: tRNA pseudouridine synthase B (357 aa).

The Nucleophile role is filled by D42.

Belongs to the pseudouridine synthase TruB family. Type 1 subfamily.

It carries out the reaction uridine(55) in tRNA = pseudouridine(55) in tRNA. In terms of biological role, responsible for synthesis of pseudouridine from uracil-55 in the psi GC loop of transfer RNAs. In Treponema denticola (strain ATCC 35405 / DSM 14222 / CIP 103919 / JCM 8153 / KCTC 15104), this protein is tRNA pseudouridine synthase B.